The primary structure comprises 288 residues: Small ribosomal subunit protein uS3 (288 aa).

A KH type-2 domain is found at 39–107 (VREYLKAKLK…PVAVNIEEVR (69 aa)). The segment at 209 to 288 (GRNDLPAAET…AAAAADGKGE (80 aa)) is disordered. The segment covering 219 to 238 (PRPEEERRPRGPRRDGRPGD) has biased composition (basic and acidic residues). Low complexity predominate over residues 277 to 288 (APAAAAADGKGE).

The protein belongs to the universal ribosomal protein uS3 family. As to quaternary structure, part of the 30S ribosomal subunit. Forms a tight complex with proteins S10 and S14.

Binds the lower part of the 30S subunit head. Binds mRNA in the 70S ribosome, positioning it for translation. The chain is Small ribosomal subunit protein uS3 from Acidovorax sp. (strain JS42).